Reading from the N-terminus, the 239-residue chain is tRNA (guanine-N(7)-)-methyltransferase (239 aa).

The S-adenosyl-L-methionine site is built by glutamate 69, glutamate 94, aspartate 121, and aspartate 144. The active site involves aspartate 144. Substrate is bound at residue lysine 148. Residues arginine 150–arginine 155 are interaction with RNA. Residues aspartate 180 and threonine 217–glutamate 220 each bind substrate.

This sequence belongs to the class I-like SAM-binding methyltransferase superfamily. TrmB family. As to quaternary structure, monomer.

The enzyme catalyses guanosine(46) in tRNA + S-adenosyl-L-methionine = N(7)-methylguanosine(46) in tRNA + S-adenosyl-L-homocysteine. It participates in tRNA modification; N(7)-methylguanine-tRNA biosynthesis. Its function is as follows. Catalyzes the formation of N(7)-methylguanine at position 46 (m7G46) in tRNA. The polypeptide is tRNA (guanine-N(7)-)-methyltransferase (Yersinia pseudotuberculosis serotype O:1b (strain IP 31758)).